A 310-amino-acid chain; its full sequence is GMP synthase [glutamine-hydrolyzing] subunit B (310 aa).

The 184-residue stretch at 2-185 folds into the GMPS ATP-PPase domain; the sequence is FKTEPFIEES…LGLPDQIAHR (184 aa). 29–35 is a binding site for ATP; it reads SGGVDSA.

In terms of assembly, heterodimer composed of a glutamine amidotransferase subunit (A) and a GMP-binding subunit (B).

The enzyme catalyses XMP + L-glutamine + ATP + H2O = GMP + L-glutamate + AMP + diphosphate + 2 H(+). The protein operates within purine metabolism; GMP biosynthesis; GMP from XMP (L-Gln route): step 1/1. In terms of biological role, catalyzes the synthesis of GMP from XMP. This is GMP synthase [glutamine-hydrolyzing] subunit B from Methanococcus maripaludis (strain DSM 14266 / JCM 13030 / NBRC 101832 / S2 / LL).